The primary structure comprises 436 residues: GTPase Der (436 aa).

EngA-type G domains are found at residues 4 to 167 (PTVA…PVEE) and 175 to 351 (IRFS…ESQN). GTP contacts are provided by residues 10–17 (GRPNVGKS), 57–61 (DTGGI), 119–122 (NKVD), 181–188 (GRPNVGKS), 229–233 (DTAGM), and 294–297 (NKWD). The 85-residue stretch at 352 to 436 (KRIPSAVLND…PIHLIARKRK (85 aa)) folds into the KH-like domain.

It belongs to the TRAFAC class TrmE-Era-EngA-EngB-Septin-like GTPase superfamily. EngA (Der) GTPase family. Associates with the 50S ribosomal subunit.

In terms of biological role, GTPase that plays an essential role in the late steps of ribosome biogenesis. This chain is GTPase Der, found in Streptococcus pyogenes serotype M28 (strain MGAS6180).